We begin with the raw amino-acid sequence, 418 residues long: Lactate dehydrogenase (NAD(+),ferredoxin) subunit LctC (418 aa).

FAD-binding positions include arginine 285, 325 to 328 (IGLS), 343 to 348 (SGAVQF), asparagine 362, and 380 to 381 (DL).

This sequence belongs to the ETF alpha-subunit/FixB family. In terms of assembly, part of the stable heterotrimeric lactate dehydrogenase-Etf complex, which is formed by the lactate dehydrogenase LctD and the electron-transferring flavoprotein (Etf) alpha (LctC) and beta (LctB) subunits. The cofactor is FAD. [4Fe-4S] cluster serves as cofactor.

It is found in the cytoplasm. The catalysed reaction is lactate + 2 reduced [2Fe-2S]-[ferredoxin] + 2 NAD(+) = 2 oxidized [2Fe-2S]-[ferredoxin] + pyruvate + 2 NADH. With respect to regulation, activity is stimulated by divalent cations. Highest stimulation is observed with Ca(2+). Functionally, the lactate dehydrogenase-Etf complex catalyzes the oxidation of lactate to pyruvate. It uses flavin-based electron confurcation to drive endergonic lactate oxidation with NAD(+) as oxidant at the expense of simultaneous exergonic electron flow from reduced ferredoxin to NAD(+). The electron transfer flavoprotein (Etf) mediates the electron transfer between the different donors and acceptors. This chain is Lactate dehydrogenase (NAD(+),ferredoxin) subunit LctC, found in Acetobacterium woodii (strain ATCC 29683 / DSM 1030 / JCM 2381 / KCTC 1655 / WB1).